The chain runs to 365 residues: Spermidine/putrescine import ATP-binding protein PotA (365 aa).

One can recognise an ABC transporter domain in the interval 7-237 (LTLADITKRF…PNNLFVASFI (231 aa)). Residue 39–46 (GPSGCGKT) coordinates ATP.

The protein belongs to the ABC transporter superfamily. Spermidine/putrescine importer (TC 3.A.1.11.1) family. As to quaternary structure, the complex is composed of two ATP-binding proteins (PotA), two transmembrane proteins (PotB and PotC) and a solute-binding protein (PotD).

It localises to the cell inner membrane. The catalysed reaction is ATP + H2O + polyamine-[polyamine-binding protein]Side 1 = ADP + phosphate + polyamineSide 2 + [polyamine-binding protein]Side 1.. Part of the ABC transporter complex PotABCD involved in spermidine/putrescine import. Responsible for energy coupling to the transport system. This is Spermidine/putrescine import ATP-binding protein PotA from Hahella chejuensis (strain KCTC 2396).